The sequence spans 292 residues: Putative gonadotropin-releasing hormone II receptor (292 aa).

The Extracellular segment spans residues 1-28 (MSAGNGTPWDATWNITVQWLAVDIACRT). A disulfide bridge connects residues Cys26 and Cys101. The chain crosses the membrane as a helical span at residues 29 to 49 (LMFLKLMATYSAAFLPVVIGL). At 50-67 (DRQAAVLNPLGSRSGVRK) the chain is on the cytoplasmic side. Residues 68–88 (LLGAAWGLSFLLAFPQLFLFH) form a helical membrane-spanning segment. The Extracellular portion of the chain corresponds to 89–115 (TVHCAGPVPFTQCVTKGSFKAQWQETT). A helical membrane pass occupies residues 116-136 (YNLFTFCCLFLLPLTAMAICY). Residues 137–177 (SRIVLSVSRPQTRKGSHAPAGEFALPRSFDNCPRVRLRALR) are Cytoplasmic-facing. The chain crosses the membrane as a helical span at residues 178–198 (LALLILLTFILCWTPYYLLGM). The Extracellular portion of the chain corresponds to 199 to 216 (WYWFSPTMLTEVPPSLSH). The helical transmembrane segment at 217 to 237 (ILFLLGLLNAPLDPLLYGAFT) threads the bilayer. Topologically, residues 238–292 (LGCRRGHQELSIDSSKEGSGRMLQEEIHAFRQLEVQKTVTSRRAGETKGISITSI) are cytoplasmic.

The protein belongs to the G-protein coupled receptor 1 family. In terms of processing, phosphorylated on the C-terminal cytoplasmic tail. Expressed in many tissues.

The protein localises to the cell membrane. Functionally, putative receptor for gonadotropin releasing hormone II (GnRH II) which is most probably non-functional. The chain is Putative gonadotropin-releasing hormone II receptor (GNRHR2) from Homo sapiens (Human).